The following is a 332-amino-acid chain: Fe(3+) dicitrate transport system permease protein FecC (332 aa).

Over 1-7 (MTAIKHP) the chain is Cytoplasmic. Residues 8–28 (VLLWGLPVAALIIIFWLSLFC) traverse the membrane as a helical segment. Residues 29-64 (YSAIPVSGADATRALLPGHTPTLPEALVQNLRLPRS) are Periplasmic-facing. The chain crosses the membrane as a helical span at residues 65–85 (LVAVLIGASLALAGTLLQTLT). Topologically, residues 86–100 (HNPMASPSLLGINSG) are cytoplasmic. The chain crosses the membrane as a helical span at residues 101 to 121 (AALAMALTSALSPTPIAGYSL). Serine 122 is a topological domain (periplasmic). The chain crosses the membrane as a helical span at residues 123–143 (FIAACGGGVSWLLVMTAGGGF). Topologically, residues 144-151 (RHTHDRNK) are cytoplasmic. Residues 152–172 (LILAGIALSAFCMGLTRITLL) traverse the membrane as a helical segment. The Periplasmic segment spans residues 173-199 (LAEDHAYGIFYWLAGGVSHARWQDVWQ). Residues 200 to 220 (LLPVVVTAVPVVLLLANQLNL) form a helical membrane-spanning segment. Over 221–244 (LNLSDSTAHTLGVNLTRLRLVINM) the chain is Cytoplasmic. The helical transmembrane segment at 245–265 (LVLLLVGACVSVAGPVAFIGL) threads the bilayer. Over 266-307 (LVPHLARFWAGFDQRNVLPVSMLLGATLMLLADVLARALAFP) the chain is Periplasmic. A helical transmembrane segment spans residues 308-328 (GDLPAGAVLALIGSPCFVWLV). Residues 329 to 332 (RRRG) lie on the Cytoplasmic side of the membrane.

It belongs to the binding-protein-dependent transport system permease family. FecCD subfamily. As to quaternary structure, the complex is composed of two ATP-binding proteins (FecE), two transmembrane proteins (FecC and FecD) and a solute-binding protein (FecB). Interacts with FecB.

The protein resides in the cell inner membrane. Part of the ABC transporter complex FecBCDE involved in citrate-dependent Fe(3+) uptake. Probably responsible for the translocation of the substrate across the membrane. This is Fe(3+) dicitrate transport system permease protein FecC from Escherichia coli (strain K12).